A 212-amino-acid chain; its full sequence is Dihydrophenazinedicarboxylate synthase (212 aa).

Serine 8 is a substrate binding site. Residues 63–66 and 78–79 each bind FMN; these read RVIA and CT. Histidine 80 is a binding site for substrate. FMN-binding positions include 84-85 and glutamine 107; that span reads RK. Substrate-binding residues include arginine 129 and serine 137. Residues 142 to 143 and arginine 195 each bind FMN; that span reads QS.

It belongs to the pyridoxamine 5'-phosphate oxidase family. FMN is required as a cofactor.

The catalysed reaction is (1R,6R)-1,4,5,5a,6,9-hexahydrophenazine-1,6-dicarboxylate + O2 = (1R,10aS)-1,4,10,10a-tetrahydrophenazine-1,6-dicarboxylate + H2O2. The enzyme catalyses (1R,10aS)-1,4,10,10a-tetrahydrophenazine-1,6-dicarboxylate + O2 = (5aS)-5,5a-dihydrophenazine-1,6-dicarboxylate + H2O2. It catalyses the reaction (1R,10aS)-1,4,10,10a-tetrahydrophenazine-1-carboxylate + O2 = (10aS)-10,10a-dihydrophenazine-1-carboxylate + H2O2. It carries out the reaction (1R)-1,4,5,10-tetrahydrophenazine-1-carboxylate + O2 = (10aS)-10,10a-dihydrophenazine-1-carboxylate + H2O2. It participates in antibiotic biosynthesis; phenazine biosynthesis. In terms of biological role, involved in the biosynthesis of the antibiotic phenazine, a nitrogen-containing heterocyclic molecule having important roles in virulence, competition and biological control. Catalyzes several oxidations in the terminal steps of core phenazine biosynthesis. It oxidizes both hexahydrophenazine-1,6-dicarboxylic acid (HHPDC) and tetrahydrophenazine-1-carboxylic acid (THPCA) and thereby contributes to the generation of both phenazine-1,6-dicarboxylic acid (PDC) and phenazine-1-carboxylic acid (PCA). It synthesizes phenazines in their reduced form, which are the likely end products in vivo. This is Dihydrophenazinedicarboxylate synthase from Burkholderia lata (strain ATCC 17760 / DSM 23089 / LMG 22485 / NCIMB 9086 / R18194 / 383).